The sequence spans 358 residues: Phospho-N-acetylmuramoyl-pentapeptide-transferase (358 aa).

10 consecutive transmembrane segments (helical) span residues 28 to 48 (AALM…ITWL), 70 to 90 (TPTM…LLWA), 92 to 112 (LTNI…AVGF), 133 to 153 (MGGQ…NPDY), 165 to 185 (VTFD…VAAS), 196 to 216 (GLAI…IYIT), 233 to 253 (VGEV…FLWF), 260 to 280 (VFMG…LALL), 285 to 305 (LVLA…IVQV), and 335 to 355 (KIII…LSVL).

It belongs to the glycosyltransferase 4 family. MraY subfamily. Mg(2+) serves as cofactor.

The protein localises to the cell inner membrane. It carries out the reaction UDP-N-acetyl-alpha-D-muramoyl-L-alanyl-gamma-D-glutamyl-meso-2,6-diaminopimeloyl-D-alanyl-D-alanine + di-trans,octa-cis-undecaprenyl phosphate = di-trans,octa-cis-undecaprenyl diphospho-N-acetyl-alpha-D-muramoyl-L-alanyl-D-glutamyl-meso-2,6-diaminopimeloyl-D-alanyl-D-alanine + UMP. It participates in cell wall biogenesis; peptidoglycan biosynthesis. Its function is as follows. Catalyzes the initial step of the lipid cycle reactions in the biosynthesis of the cell wall peptidoglycan: transfers peptidoglycan precursor phospho-MurNAc-pentapeptide from UDP-MurNAc-pentapeptide onto the lipid carrier undecaprenyl phosphate, yielding undecaprenyl-pyrophosphoryl-MurNAc-pentapeptide, known as lipid I. The protein is Phospho-N-acetylmuramoyl-pentapeptide-transferase of Desulfovibrio desulfuricans (strain ATCC 27774 / DSM 6949 / MB).